A 74-amino-acid chain; its full sequence is Small ribosomal subunit protein bS18 (74 aa).

It belongs to the bacterial ribosomal protein bS18 family. In terms of assembly, part of the 30S ribosomal subunit. Forms a tight heterodimer with protein bS6.

Its function is as follows. Binds as a heterodimer with protein bS6 to the central domain of the 16S rRNA, where it helps stabilize the platform of the 30S subunit. The chain is Small ribosomal subunit protein bS18 from Rhizorhabdus wittichii (strain DSM 6014 / CCUG 31198 / JCM 15750 / NBRC 105917 / EY 4224 / RW1) (Sphingomonas wittichii).